The sequence spans 545 residues: Chaperonin GroEL (545 aa).

Residues 30–33 (TLGP), Lys51, 87–91 (DGTTT), Gly415, and Asp495 contribute to the ATP site.

It belongs to the chaperonin (HSP60) family. In terms of assembly, forms a cylinder of 14 subunits composed of two heptameric rings stacked back-to-back. Interacts with the co-chaperonin GroES.

The protein resides in the cytoplasm. The catalysed reaction is ATP + H2O + a folded polypeptide = ADP + phosphate + an unfolded polypeptide.. Functionally, together with its co-chaperonin GroES, plays an essential role in assisting protein folding. The GroEL-GroES system forms a nano-cage that allows encapsulation of the non-native substrate proteins and provides a physical environment optimized to promote and accelerate protein folding. The chain is Chaperonin GroEL from Shewanella putrefaciens (strain CN-32 / ATCC BAA-453).